Consider the following 124-residue polypeptide: U13-hexatoxin-Mg1a (124 aa).

The signal sequence occupies residues 1–17 (MKLSALVFVASVMLVAA). Positions 18–52 (SPVKDVEEPVETHLAADLKTIEELAKYEEAAVQKR) are excised as a propeptide. 4 disulfide bridges follow: Cys54-Cys72, Cys65-Cys78, Cys69-Cys116, and Cys71-Cys87.

In terms of tissue distribution, expressed by the venom gland.

It is found in the secreted. Its function is as follows. No toxicity is observed upon intracranial injection into mice and intrathorax injection into crickets. The chain is U13-hexatoxin-Mg1a from Macrothele gigas (Japanese funnel web spider).